The primary structure comprises 312 residues: Olfactory receptor 2T8 (312 aa).

The Extracellular portion of the chain corresponds to 1-26 (MENGSYTSYFILLGLFNHTRAHQVLF). N-linked (GlcNAc...) asparagine glycosylation is found at Asn3 and Asn17. A helical transmembrane segment spans residues 27–47 (MMVLSIVLTSLFGNSLMILLI). Residues 48–55 (HWDHRLHT) are Cytoplasmic-facing. A helical membrane pass occupies residues 56-76 (PMYFLLSQLSLMDVMLVSTTV). The Extracellular segment spans residues 77 to 96 (PKMAADYLTGSKAISRAGCG). The cysteines at positions 95 and 177 are disulfide-linked. A helical membrane pass occupies residues 97–117 (AQIFFLPTLGGGECFLLAAMA). Topologically, residues 118–143 (YDRYAAVCHPLRYPTLMSWQLCLRMN) are cytoplasmic. Residues 144–164 (LSCWLLGAADGLLQAVATLSF) form a helical membrane-spanning segment. Residues 165-201 (PYCGAHEIDHFFCETPVLVRLACADTSVFENAMYICC) lie on the Extracellular side of the membrane. The helical transmembrane segment at 202–222 (VLMLLVPFSLILSSYGLILAA) threads the bilayer. Over 223 to 234 (VLHMRSTEARKK) the chain is Cytoplasmic. Residues 235–255 (AFATCSSHVAVVGLFYGAAIF) form a helical membrane-spanning segment. The Extracellular segment spans residues 256–269 (TYMRPKSHRSTNHD). A helical membrane pass occupies residues 270–290 (KVVSAFYTMFTPLLNPLIYSV). The Cytoplasmic segment spans residues 291–312 (KNSEVKGALTRCMGRCVALSRE).

This sequence belongs to the G-protein coupled receptor 1 family.

It is found in the cell membrane. Its function is as follows. Odorant receptor. The polypeptide is Olfactory receptor 2T8 (OR2T8) (Homo sapiens (Human)).